Here is a 203-residue protein sequence, read N- to C-terminus: Glycerol-3-phosphate acyltransferase (203 aa).

The next 4 membrane-spanning stretches (helical) occupy residues 3–23 (LASA…AILV), 75–95 (LGLE…GHLF), 113–133 (VILG…LIVA), and 156–176 (LLTG…LIYW).

Belongs to the PlsY family. In terms of assembly, probably interacts with PlsX.

Its subcellular location is the cell inner membrane. It catalyses the reaction an acyl phosphate + sn-glycerol 3-phosphate = a 1-acyl-sn-glycero-3-phosphate + phosphate. The protein operates within lipid metabolism; phospholipid metabolism. Functionally, catalyzes the transfer of an acyl group from acyl-phosphate (acyl-PO(4)) to glycerol-3-phosphate (G3P) to form lysophosphatidic acid (LPA). This enzyme utilizes acyl-phosphate as fatty acyl donor, but not acyl-CoA or acyl-ACP. This Thioalkalivibrio sulfidiphilus (strain HL-EbGR7) protein is Glycerol-3-phosphate acyltransferase.